A 188-amino-acid chain; its full sequence is Ribosome maturation factor RimM (188 aa).

In terms of domain architecture, PRC barrel spans 98–171 (EGEFFQGDLV…RIVIHPPEYV (74 aa)).

It belongs to the RimM family. Binds ribosomal protein uS19.

It is found in the cytoplasm. An accessory protein needed during the final step in the assembly of 30S ribosomal subunit, possibly for assembly of the head region. Essential for efficient processing of 16S rRNA. May be needed both before and after RbfA during the maturation of 16S rRNA. It has affinity for free ribosomal 30S subunits but not for 70S ribosomes. This Myxococcus xanthus (strain DK1622) protein is Ribosome maturation factor RimM.